A 481-amino-acid chain; its full sequence is Cerebral cavernous malformations 2 protein-like (481 aa).

2 disordered regions span residues 161–193 and 214–290; these read PVPA…GTAE and EARA…DPQN. The span at 184 to 193 shows a compositional bias: basic and acidic residues; that stretch reads PEKRRVGTAE. A compositionally biased stretch (gly residues) spans 214 to 223; sequence EARAAGGGGS. A compositionally biased stretch (basic and acidic residues) spans 237–251; it reads WERRQTFSGSWERRH.

Belongs to the CCM2 family.

The polypeptide is Cerebral cavernous malformations 2 protein-like (Ccm2l) (Mus musculus (Mouse)).